Here is a 177-residue protein sequence, read N- to C-terminus: ATP-dependent protease subunit HslV (177 aa).

Thr-7 is a catalytic residue. Na(+) is bound by residues Ala-162, Cys-165, and Thr-168.

The protein belongs to the peptidase T1B family. HslV subfamily. In terms of assembly, a double ring-shaped homohexamer of HslV is capped on each side by a ring-shaped HslU homohexamer. The assembly of the HslU/HslV complex is dependent on binding of ATP.

The protein resides in the cytoplasm. The catalysed reaction is ATP-dependent cleavage of peptide bonds with broad specificity.. Its activity is regulated as follows. Allosterically activated by HslU binding. Protease subunit of a proteasome-like degradation complex believed to be a general protein degrading machinery. This Thioalkalivibrio sulfidiphilus (strain HL-EbGR7) protein is ATP-dependent protease subunit HslV.